The sequence spans 623 residues: Low affinity potassium transport system protein Kup (623 aa).

A run of 12 helical transmembrane segments spans residues 10–30 (LSAVTLAAIGVVYGDIGTSPL), 47–67 (PDVVFGFLSLIFWMLILIVSV), 102–122 (ILVILGLIGGSFFYGEVVITP), 138–158 (PALDPYIVPCSIAVLTLLFVI), 166–186 (VGKLFAPVMLVWFLTLALLGL), 214–234 (VSFFALGAVVLAITGVEALYA), 248–268 (WFTVVLPSLVLNYFGQGALLL), 277–297 (PFFLLAPDWALIPLLILATLA), 338–358 (IYIPVINWTLYLAVVLVIVGF), 364–384 (LAAAYGIAVTGTMVITSVLFC), 396–416 (FFVYFLLVALLVIDVPMFSAN), and 420–440 (LFSGGWLPLSLGLVMFIIMTT).

Belongs to the HAK/KUP transporter (TC 2.A.72) family.

It localises to the cell inner membrane. The catalysed reaction is K(+)(in) + H(+)(in) = K(+)(out) + H(+)(out). In terms of biological role, responsible for the low-affinity transport of potassium into the cell. Likely operates as a K(+):H(+) symporter. The sequence is that of Low affinity potassium transport system protein Kup from Yersinia enterocolitica serotype O:8 / biotype 1B (strain NCTC 13174 / 8081).